Here is a 199-residue protein sequence, read N- to C-terminus: Golgi to ER traffic protein 1 (199 aa).

Residues 1–11 lie on the Lumenal side of the membrane; the sequence is MLLPDLHPYTI. Residues 12–31 traverse the membrane as a helical segment; that stretch reads LLSIFLVLVAKQLVATIGKS. At 32–115 the chain is on the cytoplasmic side; sequence TIQEFVWLVY…SIDKASNALI (84 aa). The stretch at 76–116 forms a coiled coil; that stretch reads YAKWTKLNRQADKLSAELQKLNQEIQQQKSSIDKASNALIL. The helical transmembrane segment at 116–136 threads the bilayer; the sequence is LVLTTLPIWIARVFYRKTHLF. Over 137–160 the chain is Lumenal; it reads YIRQGIFPKYVEWVLALPFLPNGA. Residues 161-177 form a helical membrane-spanning segment; it reads VGLTIWMFAVNSVVSNF. The Cytoplasmic segment spans residues 178–199; it reads SFLVSFPFAKRVSKPVRDTKVE.

This sequence belongs to the WRB/GET1 family. Component of the Golgi to ER traffic (GET) complex, which is composed of GET1, GET2 and GET3. Within the complex, GET1 and GET2 form a heterotetramer which is stabilized by phosphatidylinositol binding and which binds to the GET3 homodimer.

The protein resides in the endoplasmic reticulum membrane. It is found in the golgi apparatus membrane. Its function is as follows. Required for the post-translational delivery of tail-anchored (TA) proteins to the endoplasmic reticulum. Together with GET2, acts as a membrane receptor for soluble GET3, which recognizes and selectively binds the transmembrane domain of TA proteins in the cytosol. The GET complex cooperates with the HDEL receptor ERD2 to mediate the ATP-dependent retrieval of resident ER proteins that contain a C-terminal H-D-E-L retention signal from the Golgi to the ER. In Candida albicans (strain SC5314 / ATCC MYA-2876) (Yeast), this protein is Golgi to ER traffic protein 1.